The sequence spans 508 residues: MVVLTGHTLTLEEVKRVLYRDELVIASKESMEAVERSRKAVEEIVANKNVVYGINTGFGKFSDVLIAAGDVEELQWNLIHSHACGVGEPFPEEVSRAMLLLRANALLKGYSGVRPIVIERLLDLLNAKIHPVIPQQGSLGASGDLAPLSHLALALLGEGEVFYRGKRVPAIEALSAEGIAPITLKAKEGLALINGTQAMTAMGVVVYLEAEQLAYESEAIAAMTIEGLRGIIDAFDEHVHLVRGYRQQVEVAARIRDYLAGSKLTTRQGELRVQDAYSLRCIPQVHGASWQVLDYVKEKLEIEINAATDNPLIFEGGAKVISGGNFHGQPIAFAMDFMKIAIAELANISERRIERLVNPQLNDLPPFLSPAPGLQSGAMIMQYTAASLVSENKTFAHPASVDSIPSSANQEDHVSMGTIASRHAYAILQNTRRVLAIELICAMQAVEYRGVENMAPKTRKLYEAVRNIVPSITKDRIFSKDIEATAQWLKGVDWPFFLQTITPTNQYS.

The 5-imidazolinone (Ala-Gly) cross-link spans 141–143 (ASG). Serine 142 is subject to 2,3-didehydroalanine (Ser).

This sequence belongs to the PAL/histidase family. Contains an active site 4-methylidene-imidazol-5-one (MIO), which is formed autocatalytically by cyclization and dehydration of residues Ala-Ser-Gly.

The protein resides in the cytoplasm. The catalysed reaction is L-histidine = trans-urocanate + NH4(+). Its pathway is amino-acid degradation; L-histidine degradation into L-glutamate; N-formimidoyl-L-glutamate from L-histidine: step 1/3. In Geobacillus sp. (strain WCH70), this protein is Histidine ammonia-lyase.